The following is a 338-amino-acid chain: Nicotinate-nucleotide--dimethylbenzimidazole phosphoribosyltransferase (338 aa).

E306 serves as the catalytic Proton acceptor.

The protein belongs to the CobT family.

It carries out the reaction 5,6-dimethylbenzimidazole + nicotinate beta-D-ribonucleotide = alpha-ribazole 5'-phosphate + nicotinate + H(+). It functions in the pathway nucleoside biosynthesis; alpha-ribazole biosynthesis; alpha-ribazole from 5,6-dimethylbenzimidazole: step 1/2. Its function is as follows. Catalyzes the synthesis of alpha-ribazole-5'-phosphate from nicotinate mononucleotide (NAMN) and 5,6-dimethylbenzimidazole (DMB). The polypeptide is Nicotinate-nucleotide--dimethylbenzimidazole phosphoribosyltransferase (Cereibacter sphaeroides (strain ATCC 17023 / DSM 158 / JCM 6121 / CCUG 31486 / LMG 2827 / NBRC 12203 / NCIMB 8253 / ATH 2.4.1.) (Rhodobacter sphaeroides)).